We begin with the raw amino-acid sequence, 203 residues long: CASP-like protein 4B2 (203 aa).

Over 1–57 (MAMVTADASAAADAATKQPDVEKDYSSYNGASTAGAGGGGVVESVVARWRREDMLDK) the chain is Cytoplasmic. The chain crosses the membrane as a helical span at residues 58–78 (CPLALHAAAAAFAFVALVLVA). The Extracellular segment spans residues 79–92 (SNQHGDWMQFDRYQ). The helical transmembrane segment at 93-113 (EYMYLLAIAALAFAYSLAQAL) threads the bilayer. Residues 114–135 (RHAHRMRGGADPIPAPSARLFD) lie on the Cytoplasmic side of the membrane. Residues 136–156 (FIADQVVAYLLMSALSAAIPI) form a helical membrane-spanning segment. Residues 157–171 (TNRMRTAVINNFTDA) are Extracellular-facing. The N-linked (GlcNAc...) asparagine glycan is linked to N167. A helical transmembrane segment spans residues 172–192 (TAAAISMAFLAFVALALSATV). The Cytoplasmic segment spans residues 193–203 (SGYKLSRQMYM).

This sequence belongs to the Casparian strip membrane proteins (CASP) family. Homodimer and heterodimers.

It localises to the cell membrane. The chain is CASP-like protein 4B2 from Hordeum vulgare subsp. vulgare (Domesticated barley).